The chain runs to 420 residues: Gamma-glutamyl phosphate reductase (420 aa).

This sequence belongs to the gamma-glutamyl phosphate reductase family.

The protein resides in the cytoplasm. It carries out the reaction L-glutamate 5-semialdehyde + phosphate + NADP(+) = L-glutamyl 5-phosphate + NADPH + H(+). It participates in amino-acid biosynthesis; L-proline biosynthesis; L-glutamate 5-semialdehyde from L-glutamate: step 2/2. Functionally, catalyzes the NADPH-dependent reduction of L-glutamate 5-phosphate into L-glutamate 5-semialdehyde and phosphate. The product spontaneously undergoes cyclization to form 1-pyrroline-5-carboxylate. This is Gamma-glutamyl phosphate reductase from Neisseria gonorrhoeae (strain ATCC 700825 / FA 1090).